The following is a 396-amino-acid chain: Anticodon nuclease (396 aa).

Anticodon endonuclease (ACNase) that triggers the cleavage ligation of tRNA(Lys). It is activated by T4 stp protein and masked by the prrD protein (the endonuclease subunit of EcoprrI). The prr locus restricts phage T4 mutants lacking polynucleotide kinase or RNA ligase; T4 mutants lacking these genes manifest a T4-induced anticodon nuclease (ACNase). It is thought that Stp and other T4-encoded ACNase factors counteract the masking agents, thus activating the latent ACNase. This Escherichia coli protein is Anticodon nuclease.